Reading from the N-terminus, the 114-residue chain is Superoxide dismutase [Cu-Zn] (114 aa).

Residues histidine 37, histidine 39, and histidine 54 each coordinate Cu cation. Residues histidine 54, histidine 62, histidine 71, and aspartate 74 each coordinate Zn(2+). The segment at 54 to 80 (HFNPGNKEHGAPTDGNRHLGDLGNIQA) is disordered. Over residues 59-73 (NKEHGAPTDGNRHLG) the composition is skewed to basic and acidic residues. Position 111 (histidine 111) interacts with Cu cation.

This sequence belongs to the Cu-Zn superoxide dismutase family. As to quaternary structure, homodimer. Cu cation serves as cofactor. Requires Zn(2+) as cofactor.

It is found in the cytoplasm. The enzyme catalyses 2 superoxide + 2 H(+) = H2O2 + O2. In terms of biological role, destroys radicals which are normally produced within the cells and which are toxic to biological systems. The sequence is that of Superoxide dismutase [Cu-Zn] from Drosophila tolteca (Fruit fly).